Here is a 60-residue protein sequence, read N- to C-terminus: Large ribosomal subunit protein uL30 (60 aa).

It belongs to the universal ribosomal protein uL30 family. Part of the 50S ribosomal subunit.

This chain is Large ribosomal subunit protein uL30, found in Dechloromonas aromatica (strain RCB).